Here is a 444-residue protein sequence, read N- to C-terminus: ATP-dependent protease ATPase subunit HslU (444 aa).

ATP contacts are provided by residues I20 and G62–E67. The interval L137 to K162 is disordered. Positions 257, 322, and 394 each coordinate ATP.

It belongs to the ClpX chaperone family. HslU subfamily. A double ring-shaped homohexamer of HslV is capped on each side by a ring-shaped HslU homohexamer. The assembly of the HslU/HslV complex is dependent on binding of ATP.

Its subcellular location is the cytoplasm. ATPase subunit of a proteasome-like degradation complex; this subunit has chaperone activity. The binding of ATP and its subsequent hydrolysis by HslU are essential for unfolding of protein substrates subsequently hydrolyzed by HslV. HslU recognizes the N-terminal part of its protein substrates and unfolds these before they are guided to HslV for hydrolysis. The sequence is that of ATP-dependent protease ATPase subunit HslU from Bordetella petrii (strain ATCC BAA-461 / DSM 12804 / CCUG 43448).